Consider the following 512-residue polypeptide: Norfluorocurarine oxidase (512 aa).

Residues 3–23 (LLLNPSLFSLLPLLLFIIFLF) form a helical membrane-spanning segment. Cys-453 lines the heme pocket.

Belongs to the cytochrome P450 family. Heme serves as cofactor.

Its subcellular location is the membrane. The enzyme catalyses norfluorocurarine + reduced [NADPH--hemoprotein reductase] + O2 = 18-hydroxynorfluorocurarine + oxidized [NADPH--hemoprotein reductase] + H2O + H(+). It participates in alkaloid biosynthesis. Its function is as follows. Monooxygenase involved in the biosynthesis of curare monoterpene indole alkaloids (MIAs), natural products such as diaboline, a pharmacologically active compound used to regulate blood pressure. Curare alkaloids act as animal glycine receptor antagonists. Catalyzes the conversion of norfluorocurarine to 18-OH norfluorocurarine. The chain is Norfluorocurarine oxidase from Strychnos sp.